The chain runs to 119 residues: MGAGIFFSSLCALRDQLREHTILNDYIRYLMTLPCVLFLSSFGQAVIVVLCRVLYFDYSRFRYFLHKSFLSVLGRRVGLGGITVVIKAWQVITHFSVFSGAELYIGGHPCTSLTSVIVV.

The chain crosses the membrane as a helical span at residues 30–50 (LMTLPCVLFLSSFGQAVIVVL).

The protein localises to the membrane. This is an uncharacterized protein from Saccharomyces cerevisiae (strain ATCC 204508 / S288c) (Baker's yeast).